Consider the following 684-residue polypeptide: Glycine--tRNA ligase beta subunit (684 aa).

The protein belongs to the class-II aminoacyl-tRNA synthetase family. Tetramer of two alpha and two beta subunits.

It localises to the cytoplasm. It catalyses the reaction tRNA(Gly) + glycine + ATP = glycyl-tRNA(Gly) + AMP + diphosphate. The protein is Glycine--tRNA ligase beta subunit of Pseudomonas fluorescens (strain ATCC BAA-477 / NRRL B-23932 / Pf-5).